The sequence spans 179 residues: Large ribosomal subunit protein uL5 (179 aa).

Belongs to the universal ribosomal protein uL5 family. In terms of assembly, part of the 50S ribosomal subunit; part of the 5S rRNA/L5/L18/L25 subcomplex. Contacts the 5S rRNA and the P site tRNA. Forms a bridge to the 30S subunit in the 70S ribosome.

Its function is as follows. This is one of the proteins that bind and probably mediate the attachment of the 5S RNA into the large ribosomal subunit, where it forms part of the central protuberance. In the 70S ribosome it contacts protein S13 of the 30S subunit (bridge B1b), connecting the 2 subunits; this bridge is implicated in subunit movement. Contacts the P site tRNA; the 5S rRNA and some of its associated proteins might help stabilize positioning of ribosome-bound tRNAs. In Cellvibrio japonicus (strain Ueda107) (Pseudomonas fluorescens subsp. cellulosa), this protein is Large ribosomal subunit protein uL5.